The primary structure comprises 23 residues: Protein YqfH (23 aa).

The chain is Protein YqfH from Escherichia coli (strain K12).